Here is a 279-residue protein sequence, read N- to C-terminus: Large ribosomal subunit protein uL2 (279 aa).

The interval 223–279 (VAMNPVDHPMGGGEGRSSGGHPRSRKGLYAKGGKTRSANKYSKNMIVKKRVNKRLSK) is disordered. Positions 268–279 (IVKKRVNKRLSK) are enriched in basic residues.

This sequence belongs to the universal ribosomal protein uL2 family. Part of the 50S ribosomal subunit. Forms a bridge to the 30S subunit in the 70S ribosome.

Its function is as follows. One of the primary rRNA binding proteins. Required for association of the 30S and 50S subunits to form the 70S ribosome, for tRNA binding and peptide bond formation. It has been suggested to have peptidyltransferase activity; this is somewhat controversial. Makes several contacts with the 16S rRNA in the 70S ribosome. The sequence is that of Large ribosomal subunit protein uL2 from Cytophaga hutchinsonii (strain ATCC 33406 / DSM 1761 / CIP 103989 / NBRC 15051 / NCIMB 9469 / D465).